Consider the following 437-residue polypeptide: Peptidyl-prolyl cis-trans isomerase CYP38, chloroplastic (437 aa).

The N-terminal 36 residues, 1 to 36 (MAAAFASLPTFSVVNSSRFPRRRIGFSCSKKPLEVR), are a transit peptide targeting the chloroplast. Residues 37-92 (CSSGNTRYTKQRGAFTSLKECAISLALSVGLMVSVPSIALPPNAHAVANPVIPDVS) constitute a thylakoid transit peptide. One can recognise a PPIase cyclophilin-type domain in the interval 245-437 (VKIKDNPNIE…LANPSYKIAG (193 aa)).

In terms of tissue distribution, ubiquitous. Lower levels of expression in roots.

It is found in the plastid. Its subcellular location is the chloroplast thylakoid lumen. It catalyses the reaction [protein]-peptidylproline (omega=180) = [protein]-peptidylproline (omega=0). Functionally, required for the assembly and stabilization of PSII, but has no PPIases activity. The sequence is that of Peptidyl-prolyl cis-trans isomerase CYP38, chloroplastic (CYP38) from Arabidopsis thaliana (Mouse-ear cress).